A 229-amino-acid chain; its full sequence is ATP synthase subunit a (229 aa).

The next 7 helical transmembrane spans lie at 25-45 (VHII…VLGA), 58-75 (FLEV…SVTG), 81-101 (FFPL…IGLV), 110-130 (SINT…FIGI), 141-161 (FLGP…IGHL), 175-195 (MMGH…FFAP), and 196-216 (LPIM…FFLL).

This sequence belongs to the ATPase A chain family. In terms of assembly, F-type ATPases have 2 components, CF(1) - the catalytic core - and CF(0) - the membrane proton channel. CF(1) has five subunits: alpha(3), beta(3), gamma(1), delta(1), epsilon(1). CF(0) has three main subunits: a(1), b(2) and c(9-12). The alpha and beta chains form an alternating ring which encloses part of the gamma chain. CF(1) is attached to CF(0) by a central stalk formed by the gamma and epsilon chains, while a peripheral stalk is formed by the delta and b chains.

Its subcellular location is the cell inner membrane. Key component of the proton channel; it plays a direct role in the translocation of protons across the membrane. This Desulfosudis oleivorans (strain DSM 6200 / JCM 39069 / Hxd3) (Desulfococcus oleovorans) protein is ATP synthase subunit a.